The sequence spans 459 residues: Ribulose bisphosphate carboxylase large chain (459 aa).

Residue Lys4 is modified to N6,N6,N6-trimethyllysine. Positions 113 and 163 each coordinate substrate. Lys165 functions as the Proton acceptor in the catalytic mechanism. Position 167 (Lys167) interacts with substrate. Mg(2+)-binding residues include Lys191, Asp193, and Glu194. Lys191 is subject to N6-carboxylysine. The active-site Proton acceptor is the His284. The substrate site is built by Arg285, His317, and Ser369.

It belongs to the RuBisCO large chain family. Type I subfamily. In terms of assembly, heterohexadecamer of 8 large chains and 8 small chains; disulfide-linked. The disulfide link is formed within the large subunit homodimers. Mg(2+) is required as a cofactor. In terms of processing, the disulfide bond which can form in the large chain dimeric partners within the hexadecamer appears to be associated with oxidative stress and protein turnover.

The protein localises to the plastid. It is found in the chloroplast. It carries out the reaction 2 (2R)-3-phosphoglycerate + 2 H(+) = D-ribulose 1,5-bisphosphate + CO2 + H2O. It catalyses the reaction D-ribulose 1,5-bisphosphate + O2 = 2-phosphoglycolate + (2R)-3-phosphoglycerate + 2 H(+). RuBisCO catalyzes two reactions: the carboxylation of D-ribulose 1,5-bisphosphate, the primary event in carbon dioxide fixation, as well as the oxidative fragmentation of the pentose substrate in the photorespiration process. Both reactions occur simultaneously and in competition at the same active site. The sequence is that of Ribulose bisphosphate carboxylase large chain from Cephalotus follicularis (Albany pitcher plant).